A 148-amino-acid chain; its full sequence is 3-dehydroquinate dehydratase (148 aa).

The active-site Proton acceptor is tyrosine 23. Positions 75, 81, and 88 each coordinate substrate. The Proton donor role is filled by histidine 101. Residues 102–103 (LS) and arginine 112 contribute to the substrate site.

Belongs to the type-II 3-dehydroquinase family. In terms of assembly, homododecamer.

The enzyme catalyses 3-dehydroquinate = 3-dehydroshikimate + H2O. It functions in the pathway metabolic intermediate biosynthesis; chorismate biosynthesis; chorismate from D-erythrose 4-phosphate and phosphoenolpyruvate: step 3/7. Catalyzes a trans-dehydration via an enolate intermediate. The sequence is that of 3-dehydroquinate dehydratase from Xylella fastidiosa (strain 9a5c).